The chain runs to 233 residues: Phytol kinase (233 aa).

6 consecutive transmembrane segments (helical) span residues 9 to 29, 56 to 76, 96 to 118, 122 to 144, 172 to 192, and 213 to 233; these read MALPLWIAVGLAATYLGAVVL, VVLIAWWLSIPGWVGAIAGVF, VGRHSYGTLFYALSIGLLVGGFF, LPIFAAIGILVMAWGDGLAALVG, FLVTVVFLSYTFGFTVIVLVV, and NLTVPLGSALIAWAGSYLWLG.

This sequence belongs to the polyprenol kinase family.

It is found in the cell membrane. The catalysed reaction is phytol + CTP = phytyl phosphate + CDP + H(+). Its pathway is cofactor biosynthesis; tocopherol biosynthesis. Its function is as follows. Catalyzes the CTP-dependent phosphorylation of phytol to phytylmonophosphate (PMP). Can also use UTP as an alternative phosphate donor, but not ATP or GTP. Is involved in tocopherol biosynthesis, via the utilization of phytol generated by chlorophyll degradation. Also plays a significant but not critical role in the recycling of phytol for the biosynthesis of new chlorophyll molecules. The protein is Phytol kinase of Synechocystis sp. (strain ATCC 27184 / PCC 6803 / Kazusa).